Reading from the N-terminus, the 287-residue chain is Light-independent protochlorophyllide reductase iron-sulfur ATP-binding protein (287 aa).

Residues Gly-10–Thr-15 and Lys-39 contribute to the ATP site. A Mg(2+)-binding site is contributed by Ser-14. Residues Cys-95 and Cys-129 each contribute to the [4Fe-4S] cluster site. An ATP-binding site is contributed by Asn-181 to Arg-182.

It belongs to the NifH/BchL/ChlL family. In terms of assembly, homodimer. Protochlorophyllide reductase is composed of three subunits; BchL, BchN and BchB. Requires [4Fe-4S] cluster as cofactor.

It catalyses the reaction chlorophyllide a + oxidized 2[4Fe-4S]-[ferredoxin] + 2 ADP + 2 phosphate = protochlorophyllide a + reduced 2[4Fe-4S]-[ferredoxin] + 2 ATP + 2 H2O. It participates in porphyrin-containing compound metabolism; bacteriochlorophyll biosynthesis (light-independent). Functionally, component of the dark-operative protochlorophyllide reductase (DPOR) that uses Mg-ATP and reduced ferredoxin to reduce ring D of protochlorophyllide (Pchlide) to form chlorophyllide a (Chlide). This reaction is light-independent. The L component serves as a unique electron donor to the NB-component of the complex, and binds Mg-ATP. The chain is Light-independent protochlorophyllide reductase iron-sulfur ATP-binding protein from Heliobacterium modesticaldum (strain ATCC 51547 / Ice1).